Reading from the N-terminus, the 352-residue chain is Glycerol-1-phosphate dehydrogenase [NAD(P)+] (352 aa).

NAD(+)-binding positions include 98–102 and 120–123; these read GKPID and TAAS. Residue aspartate 125 participates in substrate binding. Serine 129 serves as a coordination point for NAD(+). Aspartate 172 lines the substrate pocket. Zn(2+)-binding residues include aspartate 172 and histidine 252. Residue histidine 256 participates in substrate binding. Residue histidine 268 coordinates Zn(2+).

It belongs to the glycerol-1-phosphate dehydrogenase family. Requires Zn(2+) as cofactor.

It localises to the cytoplasm. It carries out the reaction sn-glycerol 1-phosphate + NAD(+) = dihydroxyacetone phosphate + NADH + H(+). The catalysed reaction is sn-glycerol 1-phosphate + NADP(+) = dihydroxyacetone phosphate + NADPH + H(+). It functions in the pathway membrane lipid metabolism; glycerophospholipid metabolism. In terms of biological role, catalyzes the NAD(P)H-dependent reduction of dihydroxyacetonephosphate (DHAP or glycerone phosphate) to glycerol 1-phosphate (G1P). The G1P thus generated is used as the glycerophosphate backbone of phospholipids in the cellular membranes of Archaea. The chain is Glycerol-1-phosphate dehydrogenase [NAD(P)+] from Natronomonas pharaonis (strain ATCC 35678 / DSM 2160 / CIP 103997 / JCM 8858 / NBRC 14720 / NCIMB 2260 / Gabara) (Halobacterium pharaonis).